Reading from the N-terminus, the 454-residue chain is Mannosylfructose-phosphate synthase (454 aa).

Belongs to the glycosyltransferase 1 family. Mg(2+) is required as a cofactor. Requires Mn(2+) as cofactor.

The enzyme catalyses beta-D-fructose 6-phosphate + GDP-alpha-D-mannose = beta-D-fructofuranosyl alpha-D-mannopyranoside 6(F)-phosphate + GDP + H(+). The protein operates within carbohydrate metabolism; mannosylfructose biosynthesis; beta-D-fructofuranosyl alpha-D-mannopyranoside from D-fructose 6-phosphate and GDP-alpha-D-mannose: step 1/2. The protein is Mannosylfructose-phosphate synthase of Agrobacterium fabrum (strain C58 / ATCC 33970) (Agrobacterium tumefaciens (strain C58)).